The chain runs to 760 residues: Xaa-Pro dipeptidyl-peptidase (760 aa).

Residues S349, D469, and H499 each act as charge relay system in the active site.

This sequence belongs to the peptidase S15 family. Homodimer.

The protein resides in the cytoplasm. The enzyme catalyses Hydrolyzes Xaa-Pro-|- bonds to release unblocked, N-terminal dipeptides from substrates including Ala-Pro-|-p-nitroanilide and (sequentially) Tyr-Pro-|-Phe-Pro-|-Gly-Pro-|-Ile.. Removes N-terminal dipeptides sequentially from polypeptides having unsubstituted N-termini provided that the penultimate residue is proline. In Streptococcus pyogenes serotype M5 (strain Manfredo), this protein is Xaa-Pro dipeptidyl-peptidase.